We begin with the raw amino-acid sequence, 180 residues long: Small ribosomal subunit protein uS4 (180 aa).

Positions 103–165 constitute an S4 RNA-binding domain; sequence RRLQTIVYRK…KGSPFAKEGH (63 aa).

Belongs to the universal ribosomal protein uS4 family. As to quaternary structure, part of the 30S ribosomal subunit. Contacts protein S5. The interaction surface between S4 and S5 is involved in control of translational fidelity.

Its function is as follows. One of the primary rRNA binding proteins, it binds directly to 16S rRNA where it nucleates assembly of the body of the 30S subunit. Functionally, with S5 and S12 plays an important role in translational accuracy. The sequence is that of Small ribosomal subunit protein uS4 from Thermococcus kodakarensis (strain ATCC BAA-918 / JCM 12380 / KOD1) (Pyrococcus kodakaraensis (strain KOD1)).